The following is a 77-amino-acid chain: uncharacterized protein (77 aa).

Positions 11–65 (FARLRREKGLTQEEVEARSGFSQQYLSSLERGRRNPTVITLYELAQALGVSHVEL) constitute an HTH cro/C1-type domain. A DNA-binding region (H-T-H motif) is located at residues 22 to 41 (QEEVEARSGFSQQYLSSLER).

This is an uncharacterized protein from Sinorhizobium fredii (strain NBRC 101917 / NGR234).